Consider the following 272-residue polypeptide: Shikimate dehydrogenase (NADP(+)) (272 aa).

Residues 14 to 16 and Thr61 contribute to the shikimate site; that span reads SKS. The Proton acceptor role is filled by Lys65. Position 77 (Glu77) interacts with NADP(+). 2 residues coordinate shikimate: Asn86 and Asp102. NADP(+) is bound by residues 126–130, 149–154, and Met213; these read GAGGA and NRTVSR. Residue Tyr215 coordinates shikimate. Residue Gly237 coordinates NADP(+).

It belongs to the shikimate dehydrogenase family. Homodimer.

It carries out the reaction shikimate + NADP(+) = 3-dehydroshikimate + NADPH + H(+). It functions in the pathway metabolic intermediate biosynthesis; chorismate biosynthesis; chorismate from D-erythrose 4-phosphate and phosphoenolpyruvate: step 4/7. Involved in the biosynthesis of the chorismate, which leads to the biosynthesis of aromatic amino acids. Catalyzes the reversible NADPH linked reduction of 3-dehydroshikimate (DHSA) to yield shikimate (SA). The sequence is that of Shikimate dehydrogenase (NADP(+)) from Shigella boydii serotype 18 (strain CDC 3083-94 / BS512).